Consider the following 181-residue polypeptide: Probable nicotinate-nucleotide adenylyltransferase (181 aa).

Belongs to the NadD family.

The enzyme catalyses nicotinate beta-D-ribonucleotide + ATP + H(+) = deamido-NAD(+) + diphosphate. It participates in cofactor biosynthesis; NAD(+) biosynthesis; deamido-NAD(+) from nicotinate D-ribonucleotide: step 1/1. Catalyzes the reversible adenylation of nicotinate mononucleotide (NaMN) to nicotinic acid adenine dinucleotide (NaAD). This chain is Probable nicotinate-nucleotide adenylyltransferase, found in Campylobacter jejuni subsp. jejuni serotype O:23/36 (strain 81-176).